Consider the following 528-residue polypeptide: Galactokinase (528 aa).

Alpha-D-galactose-binding residues include arginine 53, glutamate 59, histidine 60, and aspartate 62. ATP contacts are provided by glycine 165, glycine 167, serine 169, and serine 170. Asparagine 213 and aspartate 217 together coordinate alpha-D-galactose. Aspartate 217 serves as the catalytic Proton acceptor. ATP is bound by residues serine 264, asparagine 265, and lysine 266. An alpha-D-galactose-binding site is contributed by tyrosine 274. At serine 381 the chain carries Phosphoserine.

The protein belongs to the GHMP kinase family. GalK subfamily.

The enzyme catalyses alpha-D-galactose + ATP = alpha-D-galactose 1-phosphate + ADP + H(+). It participates in carbohydrate metabolism; galactose metabolism. Its function is as follows. Galactokinase is a key enzyme in the galactose metabolism where it catalyzes the conversion of alpha-D-galactose to galactose 1-phosphate. Can also induce the transcription of the yeast GAL genes in response to the organism being challenged with galactose as the sole source of carbon. It's striking amino acid sequence similarity to GAL3 might explain its GAL3-like induction activity. This is Galactokinase from Saccharomyces cerevisiae (strain ATCC 204508 / S288c) (Baker's yeast).